Reading from the N-terminus, the 423-residue chain is MGDVAVETPANNVTPLTKAAPLDTIPNIDSLEGTGNDGSDEYATLKRLQRHLEYIQLQEEYIKDEQRSLKRELVRAQEEIKRIQSVPLVIGQFMEAIDQNTGIVQSSTGSNYVVRILSTLDREKLKPSSSVALHRHSNALVDILPPEADSSIAMLGENEKPDVTYADVGGLDMQKQEIREAVELPLTQFDLYKQIGIDPPRGVLLYGPPGTGKTMLVKAVANSTTASFIRVNGSEFVQKYLGEGPRMVRDVFRMARENSPAIIFIDEIDAIATKRFDAQTGADREVQRILLELLNQMDGFEQSSNVKVIMATNRADTLDPALLRPGRLDRKIEFPSLRDRRERRLIFSTIASKMSLSPEVDLDSLIVRNEPLSGAVIAAIMQEAGLRAVRKNRYNIIPRSDLEDAYAAQVKTGQEADRLEFYR.

Residue 207–214 (GPPGTGKT) coordinates ATP.

It belongs to the AAA ATPase family.

Its subcellular location is the cytoplasm. The protein localises to the nucleus. Functionally, the 26S proteasome is involved in the ATP-dependent degradation of ubiquitinated proteins. The regulatory (or ATPase) complex confers ATP dependency and substrate specificity to the 26S complex. This is 26S proteasome regulatory subunit 6B homolog (tbpA) from Aspergillus niger.